We begin with the raw amino-acid sequence, 51 residues long: Large ribosomal subunit protein bL33 (51 aa).

Belongs to the bacterial ribosomal protein bL33 family.

The polypeptide is Large ribosomal subunit protein bL33 (Pseudoalteromonas atlantica (strain T6c / ATCC BAA-1087)).